The following is a 209-amino-acid chain: High frequency lysogenization protein HflD homolog (209 aa).

Belongs to the HflD family.

The protein resides in the cytoplasm. The protein localises to the cell inner membrane. This is High frequency lysogenization protein HflD homolog from Proteus mirabilis (strain HI4320).